Reading from the N-terminus, the 471-residue chain is ATP synthase subunit beta 1 (471 aa).

157-164 (GGAGVGKT) contacts ATP.

This sequence belongs to the ATPase alpha/beta chains family. As to quaternary structure, F-type ATPases have 2 components, CF(1) - the catalytic core - and CF(0) - the membrane proton channel. CF(1) has five subunits: alpha(3), beta(3), gamma(1), delta(1), epsilon(1). CF(0) has three main subunits: a(1), b(2) and c(9-12). The alpha and beta chains form an alternating ring which encloses part of the gamma chain. CF(1) is attached to CF(0) by a central stalk formed by the gamma and epsilon chains, while a peripheral stalk is formed by the delta and b chains.

The protein resides in the cell inner membrane. The enzyme catalyses ATP + H2O + 4 H(+)(in) = ADP + phosphate + 5 H(+)(out). Its function is as follows. Produces ATP from ADP in the presence of a proton gradient across the membrane. The catalytic sites are hosted primarily by the beta subunits. This is ATP synthase subunit beta 1 from Pelobacter propionicus (strain DSM 2379 / NBRC 103807 / OttBd1).